The chain runs to 526 residues: Peptide chain release factor 3 (526 aa).

The 269-residue stretch at 9–277 (NKRRTFAIIS…DFVEYAPGPQ (269 aa)) folds into the tr-type G domain. GTP contacts are provided by residues 18-25 (SHPDAGKT), 86-90 (DTPGH), and 140-143 (NKLD).

It belongs to the TRAFAC class translation factor GTPase superfamily. Classic translation factor GTPase family. PrfC subfamily.

Its subcellular location is the cytoplasm. In terms of biological role, increases the formation of ribosomal termination complexes and stimulates activities of RF-1 and RF-2. It binds guanine nucleotides and has strong preference for UGA stop codons. It may interact directly with the ribosome. The stimulation of RF-1 and RF-2 is significantly reduced by GTP and GDP, but not by GMP. The sequence is that of Peptide chain release factor 3 from Legionella pneumophila (strain Lens).